Consider the following 88-residue polypeptide: uncharacterized protein (88 aa).

This is an uncharacterized protein from Haloarcula hispanica (His1V).